The chain runs to 241 residues: Chloride intracellular channel protein 1 (241 aa).

At Ala-2 the chain carries N-acetylalanine. Residues 2-90 (AEEQPQVELF…EEFLEAVLCP (89 aa)) form a required for insertion into the membrane region. Residue Lys-13 is modified to N6-acetyllysine. Residues 24 to 27 (CPFS) carry the G-site motif. The cysteines at positions 24 and 59 are disulfide-linked. A helical transmembrane segment spans residues 26-46 (FSQRLFMVLWLKGVTFNVTTV). Positions 93–233 (YPKLAALNPE…PDDEEIELAY (141 aa)) constitute a GST C-terminal domain. An N6-acetyllysine modification is found at Lys-119. The residue at position 121 (Ser-121) is a Phosphoserine. Lys-131 is modified (N6-acetyllysine). Phosphoserine is present on residues Ser-156 and Ser-211. Tyr-233 is subject to Phosphotyrosine.

Belongs to the chloride channel CLIC family. In terms of assembly, monomer. Homodimer (in vitro). Interacts with TRAPPC2. Dimerization requires a conformation change that leads to the exposure of a large hydrophobic surface. In vivo, this may lead to membrane insertion.

It is found in the nucleus. Its subcellular location is the nucleus membrane. The protein resides in the cytoplasm. It localises to the cell membrane. The protein localises to the endoplasmic reticulum. It catalyses the reaction L-dehydroascorbate + 2 glutathione = glutathione disulfide + L-ascorbate. The enzyme catalyses chloride(in) = chloride(out). It carries out the reaction iodide(out) = iodide(in). The catalysed reaction is thiocyanate(in) = thiocyanate(out). It catalyses the reaction nitrate(in) = nitrate(out). The enzyme catalyses bromide(in) = bromide(out). It carries out the reaction fluoride(in) = fluoride(out). Functionally, in the soluble state, catalyzes glutaredoxin-like thiol disulfide exchange reactions with reduced glutathione as electron donor. Reduces selenite and dehydroascorbate and may act as an antioxidant during oxidative stress response. Can insert into membranes and form voltage-dependent multi-ion conductive channels. Membrane insertion seems to be redox-regulated and may occur only under oxidizing conditions. Involved in regulation of the cell cycle. The polypeptide is Chloride intracellular channel protein 1 (CLIC1) (Oryctolagus cuniculus (Rabbit)).